A 90-amino-acid polypeptide reads, in one-letter code: Putative beta-neurotoxin RjAa2f (90 aa).

The N-terminal stretch at 1–18 (MKILIFIIASFMLIGVEC) is a signal peptide. In terms of domain architecture, LCN-type CS-alpha/beta spans 19–89 (KEGYPMGSDG…VWDSKTNKCG (71 aa)). Intrachain disulfides connect C29–C88, C33–C62, C40–C69, and C44–C71.

It belongs to the long (4 C-C) scorpion toxin superfamily. Sodium channel inhibitor family. Beta subfamily. In terms of tissue distribution, expressed by the venom gland.

It is found in the secreted. Functionally, beta toxins bind voltage-independently at site-4 of sodium channels (Nav) and shift the voltage of activation toward more negative potentials thereby affecting sodium channel activation and promoting spontaneous and repetitive firing. The sequence is that of Putative beta-neurotoxin RjAa2f from Rhopalurus junceus (Caribbean blue scorpion).